The chain runs to 117 residues: UPF0231 protein HI_1724 (117 aa).

The protein belongs to the UPF0231 family.

This chain is UPF0231 protein HI_1724, found in Haemophilus influenzae (strain ATCC 51907 / DSM 11121 / KW20 / Rd).